The following is a 151-amino-acid chain: Ribosomal RNA large subunit methyltransferase H (151 aa).

Residues glycine 100 and leucine 119 to phenylalanine 124 each bind S-adenosyl-L-methionine.

The protein belongs to the RNA methyltransferase RlmH family. In terms of assembly, homodimer.

The protein resides in the cytoplasm. The catalysed reaction is pseudouridine(1915) in 23S rRNA + S-adenosyl-L-methionine = N(3)-methylpseudouridine(1915) in 23S rRNA + S-adenosyl-L-homocysteine + H(+). Functionally, specifically methylates the pseudouridine at position 1915 (m3Psi1915) in 23S rRNA. The polypeptide is Ribosomal RNA large subunit methyltransferase H (Thermotoga sp. (strain RQ2)).